We begin with the raw amino-acid sequence, 47 residues long: U18-ctenitoxin-Pn1a (47 aa).

Cystine bridges form between Cys-2/Cys-16, Cys-9/Cys-22, Cys-13/Cys-46, Cys-15/Cys-34, and Cys-24/Cys-32.

As to expression, expressed by the venom gland.

It is found in the secreted. Neurotoxin. Causes spastic paralysis and death in mice by intracerebroventricular injection at dose levels of 3 ug per mouse. The protein is U18-ctenitoxin-Pn1a of Phoneutria nigriventer (Brazilian armed spider).